The sequence spans 206 residues: Transmembrane emp24 domain-containing protein bai (206 aa).

The signal sequence occupies residues 1-20; it reads MARAALIVCLLMACAWSSHA. The Lumenal portion of the chain corresponds to 21–172; the sequence is VMFKLSPNTQ…RDTNEKTNSR (152 aa). One can recognise a GOLD domain in the interval 30 to 140; sequence QKCLKEDIQA…LKPLEVDLKR (111 aa). Residues 173–193 traverse the membrane as a helical segment; the sequence is VLFFSIFSMCCLLGLATWQVL. At 194–206 the chain is on the cytoplasmic side; it reads YLRRYFKAKKLIE.

This sequence belongs to the EMP24/GP25L family.

The protein localises to the membrane. Eca and bai are essential, though not redundant, for dorsoventral patterning of the embryo. Specifically required during early embryogenesis for the activity of maternal tkv, while the zygotic tkv is not affected. The sequence is that of Transmembrane emp24 domain-containing protein bai from Drosophila erecta (Fruit fly).